Reading from the N-terminus, the 96-residue chain is Dynein light chain roadblock-type 2 (96 aa).

Position 2 is an N-acetylalanine (alanine 2).

This sequence belongs to the GAMAD family. Homodimer. The cytoplasmic dynein 1 complex consists of two catalytic heavy chains (HCs) and a number of non-catalytic subunits presented by intermediate chains (ICs), light intermediate chains (LICs) and light chains (LCs); the composition seems to vary in respect to the IC, LIC and LC composition. The heavy chain homodimer serves as a scaffold for the probable homodimeric assembly of the respective non-catalytic subunits. The ICs and LICs bind directly to the HC dimer and the LCs assemble on the IC dimer. Interacts with DYNC1I1 and DYNC1I2. Self-associates. Interacts with DYNLRB1. In terms of tissue distribution, high expression in heart, brain, placenta, skeletal muscle, prostate and small intestine; moderate in kidney, pancreas, spleen, testis, ovary and colon; low in lung, liver, thymus and leukocyte.

It is found in the cytoplasm. Its subcellular location is the cytoskeleton. In terms of biological role, acts as one of several non-catalytic accessory components of the cytoplasmic dynein 1 complex that are thought to be involved in linking dynein to cargos and to adapter proteins that regulate dynein function. Cytoplasmic dynein 1 acts as a motor for the intracellular retrograde motility of vesicles and organelles along microtubules. This chain is Dynein light chain roadblock-type 2 (DYNLRB2), found in Homo sapiens (Human).